A 463-amino-acid polypeptide reads, in one-letter code: Hydroxyacid-oxoacid transhydrogenase, mitochondrial (463 aa).

Belongs to the iron-containing alcohol dehydrogenase family. Hydroxyacid-oxoacid transhydrogenase subfamily.

The protein localises to the mitochondrion. It carries out the reaction (S)-3-hydroxybutanoate + 2-oxoglutarate = (R)-2-hydroxyglutarate + acetoacetate. The enzyme catalyses 4-hydroxybutanoate + 2-oxoglutarate = (R)-2-hydroxyglutarate + succinate semialdehyde. Its function is as follows. Catalyzes the cofactor-independent reversible oxidation of gamma-hydroxybutyrate (GHB) to succinic semialdehyde (SSA) coupled to reduction of 2-ketoglutarate (2-KG) to D-2-hydroxyglutarate (D-2-HG). L-3-hydroxybutyrate (L-3-OHB) is also a substrate for HOT when using 2-KG as hydrogen acceptor, resulting in the formation of D-2-HG. In Xenopus tropicalis (Western clawed frog), this protein is Hydroxyacid-oxoacid transhydrogenase, mitochondrial (adhfe1).